Here is a 180-residue protein sequence, read N- to C-terminus: Napin (180 aa).

Residues 1–21 form the signal peptide; sequence MANKLFLVSATLAFFFLLTNA. 2 consecutive propeptides follow at residues 22–38 and 75–94; these read SIYR…ATNP and PSWT…NPQG.

Belongs to the 2S seed storage albumins family. As to quaternary structure, the mature protein consists of a small and a large chain linked by disulfide bonds. As to expression, cotyledons and the axis.

Functionally, the small, basic, water-soluble napins are one of the two major kinds of storage proteins synthesized in the seed during its maturation. The protein is Napin (NAP1) of Brassica napus (Rape).